Reading from the N-terminus, the 133-residue chain is MTLNLSVLTPNRIVWDSEVEEIVLSTNSGQIGILPNHAPIATAVDIGILRIRLNDQWLTMALMGGFARIGNNEITVLVNDAEKGSDIDPQEAQQTLELAEANVKKAEGRRQKIEANLALQRARTRVEAINPIS.

Belongs to the ATPase epsilon chain family. As to quaternary structure, F-type ATPases have 2 components, CF(1) - the catalytic core - and CF(0) - the membrane proton channel. CF(1) has five subunits: alpha(3), beta(3), gamma(1), delta(1), epsilon(1). CF(0) has three main subunits: a, b and c.

The protein resides in the plastid. Its subcellular location is the chloroplast thylakoid membrane. Produces ATP from ADP in the presence of a proton gradient across the membrane. This is ATP synthase epsilon chain, chloroplastic from Nicotiana tomentosiformis (Tobacco).